Consider the following 306-residue polypeptide: Tryptophan 2,3-dioxygenase (306 aa).

Residues 1–33 are disordered; sequence MQPPGDDAAPRCPFAGAHAPDAPHVPEAAGDDA. Residues 75–79, Tyr137, and Arg141 each bind substrate; that span reads FIIQH. His264 serves as a coordination point for heme. A substrate-binding site is contributed by Thr278.

This sequence belongs to the tryptophan 2,3-dioxygenase family. In terms of assembly, homotetramer. The cofactor is heme.

The catalysed reaction is L-tryptophan + O2 = N-formyl-L-kynurenine. It functions in the pathway amino-acid degradation; L-tryptophan degradation via kynurenine pathway; L-kynurenine from L-tryptophan: step 1/2. In terms of biological role, heme-dependent dioxygenase that catalyzes the oxidative cleavage of the L-tryptophan (L-Trp) pyrrole ring and converts L-tryptophan to N-formyl-L-kynurenine. Catalyzes the oxidative cleavage of the indole moiety. This is Tryptophan 2,3-dioxygenase from Burkholderia pseudomallei (strain 1106a).